An 804-amino-acid polypeptide reads, in one-letter code: Leucine--tRNA ligase (804 aa).

The 'HIGH' region motif lies at P40–H51. Residues K576 to S580 carry the 'KMSKS' region motif. K579 is an ATP binding site.

This sequence belongs to the class-I aminoacyl-tRNA synthetase family.

Its subcellular location is the cytoplasm. It catalyses the reaction tRNA(Leu) + L-leucine + ATP = L-leucyl-tRNA(Leu) + AMP + diphosphate. The polypeptide is Leucine--tRNA ligase (Bacillus subtilis (strain 168)).